We begin with the raw amino-acid sequence, 361 residues long: dTDP-glucose 4,6-dehydratase 1 (361 aa).

Residues 11-12 (FI), 32-35 (DKLT), 58-59 (DI), 80-84 (LAAES), and Thr-99 each bind NAD(+). Substrate is bound at residue Ser-84. Thr-133 is a binding site for substrate. Asp-134 (proton donor) is an active-site residue. Residues Glu-135 and Tyr-167 each act as proton acceptor in the active site. 167–171 (YSASK) contributes to the NAD(+) binding site. Residue Asn-196 participates in substrate binding. Residue Asn-197 coordinates NAD(+). Residues 206-207 (KL), 222-224 (PIY), Arg-231, Asn-266, and 296-300 (DRPGH) contribute to the substrate site.

The protein belongs to the NAD(P)-dependent epimerase/dehydratase family. dTDP-glucose dehydratase subfamily. Homodimer. The cofactor is NAD(+).

It carries out the reaction dTDP-alpha-D-glucose = dTDP-4-dehydro-6-deoxy-alpha-D-glucose + H2O. It participates in carbohydrate biosynthesis; dTDP-L-rhamnose biosynthesis. It functions in the pathway bacterial outer membrane biogenesis; LPS O-antigen biosynthesis. Functionally, catalyzes the dehydration of dTDP-D-glucose to form dTDP-6-deoxy-D-xylo-4-hexulose via a three-step process involving oxidation, dehydration and reduction. This chain is dTDP-glucose 4,6-dehydratase 1 (rfbB), found in Escherichia coli (strain K12).